The following is an 809-amino-acid chain: Lethal factor (809 aa).

The first 33 residues, 1 to 33, serve as a signal peptide directing secretion; the sequence is MNIKKEFIKVISMSCLVTAITLSGPVFIPLVQG. The interval 39 to 66 is disordered; sequence DVGMHVKEKEKNKDENKRKDEERNKTQE. A compositionally biased stretch (basic and acidic residues) spans 40–66; sequence VGMHVKEKEKNKDENKRKDEERNKTQE. The segment at 60 to 295 is i; PA-binding region; the sequence is ERNKTQEEHL…NLSLEELKDQ (236 aa). Residues 70 to 282 enclose the ATLF-like 1 domain; sequence KEIMKHIVKI…AFNYMDKFNE (213 aa). Residues 296-330 are IIA; the sequence is RMLARYEKWEKIKQHYQHWSDSLSEEGRGLLKKLQ. Tandem repeats lie at residues 315-333, 342-357, 360-378, 380-397, and 399-416. A 5 X approximate repeats region spans residues 315–416; sequence SDSLSEEGRG…EFLKKLKLDI (102 aa). An III region spans residues 336–416; it reads KKDDIIHSLS…EFLKKLKLDI (81 aa). Residues 420 to 583 form an IIB region; the sequence is DINQRLQDTG…EYIRIDAKVV (164 aa). Residues 585–809 form an IV region; that stretch reads KSKIDTKIQE…NDQIKFIINS (225 aa). One can recognise an ATLF-like 2 domain in the interval 609-804; sequence LPKYTKLITF…TFQFINDQIK (196 aa). His-719 provides a ligand contact to Zn(2+). The active-site Proton acceptor is Glu-720. Residues His-723, Tyr-761, and Glu-768 each contribute to the Zn(2+) site.

Belongs to the peptidase M34 family. Interacts (via ATLF domain 1) with the cleaved form of protective antigen (PA-63) anthrax toxin; interaction is required for LF translocation into the host cytoplasm. Interacts with PA-63 homooligomers (either homoheptamers or homooctamers): three molecules of LF bind the PA-63 homoheptamer to form the PA(7)LF(3) complex, in which the relative position of the N-terminal alpha-helices in the three LFs determines which factor is translocated first. Zn(2+) is required as a cofactor.

The protein resides in the secreted. It localises to the host cytoplasm. Its subcellular location is the host cytosol. It catalyses the reaction Preferred amino acids around the cleavage site can be denoted BBBBxHx-|-H, in which B denotes Arg or Lys, H denotes a hydrophobic amino acid, and x is any amino acid. The only known protein substrates are mitogen-activated protein (MAP) kinase kinases.. Inhibited by NSC-12155 (1,3-Bis(2-methyl-4-aminoquinoline-6-yl)ure). Inhibited by phenoxyacetic acid bearing alpha-benzyl substituents on the C2-side chain. Inhibited by sulfonamide hydroxamate with benzylic additions at the sulfonamide nitrogen. Also inhibited by sulfonamide hydroxamates with alkylation at the sulfonamide nitrogen. Inhibited by hydroxamic acid inhibitors. In terms of biological role, lethal factor (LF), which constitutes one of the three proteins composing the anthrax toxin, is able to trigger rapid cell death in macrophages. Acts as a protease that cleaves the N-terminal of most dual specificity mitogen-activated protein kinase kinases (MAPKKs or MAP2Ks) (except for MAP2K5): cleavage invariably occurs within the N-terminal proline-rich region preceding the kinase domain, thus disrupting a sequence involved in directing specific protein-protein interactions necessary for the assembly of signaling complexes. Also cleaves mouse Nlrp1b: host Nlrp1b cleavage promotes ubiquitination and degradation of the N-terminal part of Nlrp1b by the proteasome, thereby releasing the cleaved C-terminal part of Nlrp1b, which polymerizes and forms the Nlrp1b inflammasome followed by host cell pyroptosis. Able to cleave mouse Nlrp1b alleles 1 and 5, while it is not able to cleave Nlrp1b alleles 2, 3 and 4. In contrast, does not cleave NLRP1 human ortholog. LF is not toxic by itself and only acts as a lethal factor when associated with protective antigen (PA) to form the lethal toxin (LeTx): PA is required for LF translocation into the host cytosol. The polypeptide is Lethal factor (Bacillus anthracis).